The following is a 314-amino-acid chain: Olfactory receptor 5F1 (314 aa).

Topologically, residues 1 to 25 (MTRKNYTSLTEFVLLGLADTLELQI) are extracellular. N5 carries an N-linked (GlcNAc...) asparagine glycan. The chain crosses the membrane as a helical span at residues 26 to 46 (ILFLFFLVIYTLTVLGNLGMI). Residues 47–54 (LLIRIDSQ) are Cytoplasmic-facing. The helical transmembrane segment at 55-75 (LHTPMYFFLANLSFVDVCNST) threads the bilayer. Topologically, residues 76-99 (TITPKMLADLLSEKKTISFAGCFL) are extracellular. C97 and C189 are disulfide-bonded. A helical transmembrane segment spans residues 100-120 (QMYFFISLATTECILFGLMAY). Over 121 to 139 (DRYAAICRPLLYSLIMSRT) the chain is Cytoplasmic. The helical transmembrane segment at 140-160 (VYLKMAAGAFAAGLLNFMVNT) threads the bilayer. The Extracellular portion of the chain corresponds to 161–196 (SHVSSLSFCDSNVIHHFFCDSPPLFKLSCSDTILKE). A helical membrane pass occupies residues 197 to 217 (SISSILAGVNIVGTLLVILSS). The Cytoplasmic portion of the chain corresponds to 218–237 (YSYVLFSIFSMHSGEGRHRA). A helical transmembrane segment spans residues 238–258 (FSTCASHLTAIILFYATCIYT). Over 259 to 271 (YLRPSSSYSLNQD) the chain is Extracellular. The chain crosses the membrane as a helical span at residues 272–292 (KVASVFYTVVIPMLNPLIYSL). The Cytoplasmic segment spans residues 293 to 314 (RSKEVKKALANVISRKRTSSFL).

This sequence belongs to the G-protein coupled receptor 1 family.

It localises to the cell membrane. Functionally, odorant receptor. This chain is Olfactory receptor 5F1 (OR5F1), found in Homo sapiens (Human).